We begin with the raw amino-acid sequence, 768 residues long: Transferrin receptor protein 1 (768 aa).

The Cytoplasmic segment spans residues methionine 1–tyrosine 68. The mediates interaction with SH3BP4 stretch occupies residues methionine 1–cysteine 70. Serine 10 and serine 19 each carry phosphoserine. Residue tyrosine 20 is modified to Phosphotyrosine. Positions tyrosine 20–phenylalanine 23 match the Endocytosis signal motif. At threonine 21 the chain carries Phosphothreonine. Serine 24 bears the Phosphoserine mark. The Stop-transfer sequence motif lies at lysine 61 to arginine 64. Residues valine 69 to leucine 89 form a helical membrane-spanning segment. Cysteine 70 carries the S-palmitoyl cysteine lipid modification. At alanine 90 to phenylalanine 768 the chain is on the extracellular side. One can recognise a PA domain in the interval serine 231 to phenylalanine 321. Residues asparagine 259 and asparagine 325 are each glycosylated (N-linked (GlcNAc...) asparagine). Positions threonine 577–phenylalanine 768 are ligand-binding. Residues arginine 654–aspartate 656 carry the Cell attachment site motif. N-linked (GlcNAc...) asparagine glycosylation is found at asparagine 730 and asparagine 735.

Belongs to the peptidase M28 family. M28B subfamily. In terms of assembly, homodimer; disulfide-linked. Binds one transferrin or HFE molecule per subunit. Interacts with SH3BP4. Interacts with SH3BP3. Interacts with STEAP3; facilitates TFRC endocytosis in erythroid precursor cells. Post-translationally, stearoylated by ZDHHC6 which inhibits TFRC-mediated activation of the JNK pathway and promotes mitochondrial fragmentation. Stearoylation does not affect iron uptake.

The protein localises to the cell membrane. It is found in the melanosome. Cellular uptake of iron occurs via receptor-mediated endocytosis of ligand-occupied transferrin receptor into specialized endosomes. Endosomal acidification leads to iron release. The apotransferrin-receptor complex is then recycled to the cell surface with a return to neutral pH and the concomitant loss of affinity of apotransferrin for its receptor. Transferrin receptor is necessary for development of erythrocytes and the nervous system. Positively regulates T and B cell proliferation through iron uptake. Acts as a lipid sensor that regulates mitochondrial fusion by regulating activation of the JNK pathway. When dietary levels of stearate (C18:0) are low, promotes activation of the JNK pathway, resulting in HUWE1-mediated ubiquitination and subsequent degradation of the mitofusin MFN2 and inhibition of mitochondrial fusion. When dietary levels of stearate (C18:0) are high, TFRC stearoylation inhibits activation of the JNK pathway and thus degradation of the mitofusin MFN2. Mediates uptake of NICOL1 into fibroblasts where it may regulate extracellular matrix production. This is Transferrin receptor protein 1 (TFRC) from Sus scrofa (Pig).